A 159-amino-acid chain; its full sequence is Transcription elongation factor GreA (159 aa).

The stretch at 2 to 77 (EENKEFLLTQ…LENMVRKAVI (76 aa)) forms a coiled coil.

This sequence belongs to the GreA/GreB family.

Necessary for efficient RNA polymerase transcription elongation past template-encoded arresting sites. The arresting sites in DNA have the property of trapping a certain fraction of elongating RNA polymerases that pass through, resulting in locked ternary complexes. Cleavage of the nascent transcript by cleavage factors such as GreA or GreB allows the resumption of elongation from the new 3'terminus. GreA releases sequences of 2 to 3 nucleotides. The protein is Transcription elongation factor GreA of Clostridioides difficile (strain 630) (Peptoclostridium difficile).